The sequence spans 525 residues: Peptide chain release factor 3 (525 aa).

Residues 8 to 276 enclose the tr-type G domain; the sequence is AMRRTFAIIS…AFVKEAPPPQ (269 aa). Residues 17 to 24, 85 to 89, and 139 to 142 contribute to the GTP site; these read SHPDAGKT, DTPGH, and NKMD.

The protein belongs to the TRAFAC class translation factor GTPase superfamily. Classic translation factor GTPase family. PrfC subfamily.

The protein resides in the cytoplasm. Functionally, increases the formation of ribosomal termination complexes and stimulates activities of RF-1 and RF-2. It binds guanine nucleotides and has strong preference for UGA stop codons. It may interact directly with the ribosome. The stimulation of RF-1 and RF-2 is significantly reduced by GTP and GDP, but not by GMP. This chain is Peptide chain release factor 3, found in Coxiella burnetii (strain CbuK_Q154) (Coxiella burnetii (strain Q154)).